The primary structure comprises 1465 residues: DNA polymerase III PolC-type (1465 aa).

The 157-residue stretch at 427–583 (YVVFDVETTG…YDAEATGRLL (157 aa)) folds into the Exonuclease domain.

Belongs to the DNA polymerase type-C family. PolC subfamily.

The protein localises to the cytoplasm. The enzyme catalyses DNA(n) + a 2'-deoxyribonucleoside 5'-triphosphate = DNA(n+1) + diphosphate. Required for replicative DNA synthesis. This DNA polymerase also exhibits 3' to 5' exonuclease activity. The sequence is that of DNA polymerase III PolC-type from Streptococcus pyogenes serotype M2 (strain MGAS10270).